Consider the following 362-residue polypeptide: DNA replication and repair protein RecF (362 aa).

30–37 provides a ligand contact to ATP; that stretch reads GDNAQGKT.

It belongs to the RecF family.

Its subcellular location is the cytoplasm. In terms of biological role, the RecF protein is involved in DNA metabolism; it is required for DNA replication and normal SOS inducibility. RecF binds preferentially to single-stranded, linear DNA. It also seems to bind ATP. The chain is DNA replication and repair protein RecF from Agathobacter rectalis (strain ATCC 33656 / DSM 3377 / JCM 17463 / KCTC 5835 / VPI 0990) (Eubacterium rectale).